We begin with the raw amino-acid sequence, 1319 residues long: DNA (cytosine-5)-methyltransferase CMT2 (1319 aa).

Residues 1–15 are compositionally biased toward pro residues; that stretch reads METPPPDPVSPPPPA. Disordered regions lie at residues 1 to 34, 142 to 189, 265 to 302, and 442 to 468; these read METP…GGFS, ALDS…VASS, SAAS…KLPA, and KSRV…RART. Positions 266-279 are enriched in polar residues; that stretch reads AASSMPLNQNGDSS. The span at 285-296 shows a compositional bias: basic and acidic residues; sequence RVADSRKSRSSE. One can recognise a BAH domain in the interval 602–719; sequence YTFCIGECAF…IDYSTFSTIE (118 aa). In terms of domain architecture, SAM-dependent MTase C5-type spans 758–1296; that stretch reads LSLLDLYCGC…YALAMAYLKK (539 aa). Positions 863–928 constitute a Chromo domain; that stretch reads FEVWKLVDIC…EGHRQRILPR (66 aa). Residue Cys941 is part of the active site.

The protein localises to the nucleus. It catalyses the reaction a 2'-deoxycytidine in DNA + S-adenosyl-L-methionine = a 5-methyl-2'-deoxycytidine in DNA + S-adenosyl-L-homocysteine + H(+). In terms of biological role, involved in CpXpG DNA methylation. This is DNA (cytosine-5)-methyltransferase CMT2 from Oryza sativa subsp. japonica (Rice).